We begin with the raw amino-acid sequence, 211 residues long: Envelope protein UL45 homolog (211 aa).

Residues 1–46 are Intravirion-facing; sequence MMSPTPEDDRDLVVVRGRLRMMDNGAEHDRERRSYTAWPHLCCGCT. Residues 47 to 67 traverse the membrane as a helical; Signal-anchor for type II membrane protein segment; it reads IGIILTMFVIATTLLLASLFA. The Virion surface portion of the chain corresponds to 68–211; the sequence is FSYMSLESGT…SSILSNAIMK (144 aa). N-linked (GlcNAc...) asparagine; by host glycans are attached at residues Asn-96 and Asn-133.

Belongs to the herpesviridae HHV-1 UL45 family.

The protein resides in the virion membrane. In Gallid herpesvirus 2 (strain Chicken/Md5/ATCC VR-987) (GaHV-2), this protein is Envelope protein UL45 homolog (UL45H).